A 929-amino-acid chain; its full sequence is Dual specificity protein phosphatase PHS1 (929 aa).

Disordered stretches follow at residues 1-27 and 545-618; these read MAEP…LVHD and PESP…SLSS. 2 stretches are compositionally biased toward basic and acidic residues: residues 552–580 and 591–606; these read HGHE…ESDM and ENKE…ESWH. Positions 703–848 constitute a Tyrosine-protein phosphatase domain; the sequence is KPSMIQENLF…LINLDKKCHG (146 aa). The active-site Phosphocysteine intermediate is Cys-792. Position 792 to 798 (792 to 798) interacts with substrate; sequence CFEGRSR. The Nuclear export signal motif lies at 903–911; the sequence is QKALEALKL.

In terms of assembly, interacts with MPK18. As to expression, expressed in roots, leaves and flowers.

It is found in the cytoplasm. It carries out the reaction O-phospho-L-seryl-[protein] + H2O = L-seryl-[protein] + phosphate. It catalyses the reaction O-phospho-L-threonyl-[protein] + H2O = L-threonyl-[protein] + phosphate. The enzyme catalyses O-phospho-L-tyrosyl-[protein] + H2O = L-tyrosyl-[protein] + phosphate. In terms of biological role, probable dual specificity phosphatase that binds and dephosphorylates MPK18, modulating the organization and dynamics of cortical microtubules. Acts as a negative regulator of abscisic acid (ABA) signaling during seed germination and light-induced stomata aperture. The chain is Dual specificity protein phosphatase PHS1 (PHS1) from Arabidopsis thaliana (Mouse-ear cress).